The sequence spans 358 residues: sn-glycerol-3-phosphate import ATP-binding protein UgpC (358 aa).

The ABC transporter domain maps to 4 to 235 (VELKQVRKTY…PATLFVASFI (232 aa)). 37–44 (GPSGCGKS) contributes to the ATP binding site.

It belongs to the ABC transporter superfamily. sn-glycerol-3-phosphate importer (TC 3.A.1.1.3) family. In terms of assembly, the complex is composed of two ATP-binding proteins (UgpC), two transmembrane proteins (UgpA and UgpE) and a solute-binding protein (UgpB).

Its subcellular location is the cell inner membrane. It catalyses the reaction sn-glycerol 3-phosphate(out) + ATP + H2O = sn-glycerol 3-phosphate(in) + ADP + phosphate + H(+). Its function is as follows. Part of the ABC transporter complex UgpBAEC involved in sn-glycerol-3-phosphate (G3P) import. Responsible for energy coupling to the transport system. The chain is sn-glycerol-3-phosphate import ATP-binding protein UgpC from Roseobacter denitrificans (strain ATCC 33942 / OCh 114) (Erythrobacter sp. (strain OCh 114)).